We begin with the raw amino-acid sequence, 70 residues long: Ranatuerin-2SN1 (70 aa).

The first 22 residues, 1–22 (MFTLKKSLLLIFFLGTISLSLC), serve as a signal peptide directing secretion. The propeptide at 23–40 (EKERDADDDEVEVIKQEE) is removed in mature form. Residues Cys-65 and Cys-70 are joined by a disulfide bond.

This sequence belongs to the frog skin active peptide (FSAP) family. Ranatuerin subfamily. Expressed by the skin glands.

The protein localises to the secreted. Its function is as follows. Antimicrobial peptide. Weakly active against P.faecalis X29. Not active against fungi. Shows very weak hemolytic activity against human erythrocytes. The sequence is that of Ranatuerin-2SN1 from Sylvirana spinulosa (Fine-spined frog).